A 382-amino-acid chain; its full sequence is Intermediate transcription factor 3 large subunit (382 aa).

Belongs to the poxviruses A23 family. Heterodimer of a 45 kDa and a 32 kDa subunit.

In terms of biological role, acts with RNA polymerase to initiate transcription from intermediate gene promoters. In Monkeypox virus (strain Zaire-96-I-16) (MPX), this protein is Intermediate transcription factor 3 large subunit (VITF3L).